Here is a 190-residue protein sequence, read N- to C-terminus: ATP synthase subunit b (190 aa).

The chain crosses the membrane as a helical span at residues 34-54 (LDIFETNLINLAILVGILFYF).

This sequence belongs to the ATPase B chain family. As to quaternary structure, F-type ATPases have 2 components, F(1) - the catalytic core - and F(0) - the membrane proton channel. F(1) has five subunits: alpha(3), beta(3), gamma(1), delta(1), epsilon(1). F(0) has four main subunits: a(1), b(1), b'(1) and c(10-14). The alpha and beta chains form an alternating ring which encloses part of the gamma chain. F(1) is attached to F(0) by a central stalk formed by the gamma and epsilon chains, while a peripheral stalk is formed by the delta, b and b' chains.

It is found in the cellular thylakoid membrane. Its function is as follows. F(1)F(0) ATP synthase produces ATP from ADP in the presence of a proton or sodium gradient. F-type ATPases consist of two structural domains, F(1) containing the extramembraneous catalytic core and F(0) containing the membrane proton channel, linked together by a central stalk and a peripheral stalk. During catalysis, ATP synthesis in the catalytic domain of F(1) is coupled via a rotary mechanism of the central stalk subunits to proton translocation. In terms of biological role, component of the F(0) channel, it forms part of the peripheral stalk, linking F(1) to F(0). This chain is ATP synthase subunit b, found in Nostoc punctiforme (strain ATCC 29133 / PCC 73102).